Here is a 398-residue protein sequence, read N- to C-terminus: Autophagy-related protein 39 (398 aa).

The ATG8-binding motif lies at 8-11 (WNLV). Residues 15-50 (RLRKGREGEEQSSKSEISLDSLHESSFAGEDDEDFD) are disordered. The ATG11-binding motif lies at 52–59 (DVLSNTSS). A helical transmembrane segment spans residues 148-164 (VIMLSSLLSMTFSYLAL).

In terms of assembly, interacts with ATG8 and ATG11.

It is found in the endoplasmic reticulum membrane. The protein localises to the preautophagosomal structure membrane. Acts as a receptor for reticulophagy and nucleophagy. Directs autophagic sequestration of double-membrane vesicles derived from the nuclear envelope and perinuclear endoplasmic reticulum (pnER) into autophagosomes. Is not required for the cytoplasm-to-vacuole targeting pathway, mitophagy, pexophagy, and non-selective autophagy. In Saccharomyces cerevisiae (strain ATCC 204508 / S288c) (Baker's yeast), this protein is Autophagy-related protein 39.